We begin with the raw amino-acid sequence, 243 residues long: DNA repair protein RecO (243 aa).

This sequence belongs to the RecO family.

In terms of biological role, involved in DNA repair and RecF pathway recombination. The sequence is that of DNA repair protein RecO from Azoarcus sp. (strain BH72).